A 1232-amino-acid polypeptide reads, in one-letter code: MRRYRIDSMKYEQRMNAGASGFDMSDWNNPYNASPPSSRGGDDDASSVNHSRPRRSRLDNDIPQPRRPILIQPARPVSQKSNRQGTGMSNGSRGLNSTFNGYDRTYSRYHQNSSRGPSEGFSGAPSARNASGYASDYANSRAGVGLLPNNHREPVRPRSTAAERYANASSMRNGFVYDSGESDKTSEELEEDEEEEEVRNFYMEGRAQGSRSVTNTLASEVYNSESESYYYGVVKLGSAIVDHVFRTMPPPEKYYKMPPIDRVAYVFYCAVNNKPYNNIDEFHVIFNREFYSYRGYGDSKDLALFKVCKRMQEEFSLKQLEADRLAYEKARQEAAESEKLDFNQHKIEEREEPKLNISQPEEVLSNGPLHYHSCLQFATIGVGGKLVIIKPAGTIDSITGHVLSTSSVHVDDLKTFLHFDEQSGKVIESVQNFKGPLIAGQTPTHSVRLYIQRQIDALRQIRNAGDVKKSEVVDALLVWQLLEIMVQQHGRVTGPDVATLLTNASEELGEKTGISSNGTSESGSKFEAKERFNKYLLGGHINEAVESAITDGLYADAMTLIRRLHPNDAKKIEEIEARFMNLRSIDDPFATLVAVSSDQPPPILTNSAFDDDNNWKRHAAIVLANLNSQTAMQTIYHLGLLLAKRERNCAADFCLLVVCILAGYDPFIPVAHDGDETSRKHIGLVHSGSNLLNRVDGLSGTAGFSFTDLHATDIFDYALRLGNNNVDSPLAKSIDYQLARIEYAKKLSSFGGFATDAFRYCTEVARSLWMYVAAFDKNAMFDLCDLAESLQYMAAATPDESGWITTMRGMLGAAPVQESQQHVPQPQPVENKSISSEAKKWHDEHQAPLEIGSRNDQQHNDKTVEKPIAPGRASLPPPTLVTESSSESTFTDKSDSSVTVAASASRTSTLTSSTLPPPPSLPKTIEKPISTPPPISKNVVPEMTPPAIVKPPMPTLSMPIPPVSTPIMVSPQPIPIPKPVDASIAKSPRSELDDLWDTSPPSNQTSYPPAPRNIQPSYSPAPNFANPTAPSVPTPPPAVSSAPVLQQATLGQASIPNAKTTAPPVPQKQPELALNERKASKGWFGSIKEKVIKSIPSANQMILPDDSKPSIVWDPVQKRYVGAGVEEEVVAAPPPVMSAPHLMGGGPDSNKSSTNSLRSARSGVGSRYLQSGMATSQAPAMDTGMPPMMPPTMPMSFSFMPAPTEDDSSEYVDPFSGEPTAPSESLSKQNND.

Disordered stretches follow at residues 18–134 (GASG…SGYA), 172–193 (RNGF…EEDE), 815–843 (PVQE…KWHD), 866–942 (KPIA…VVPE), 972–1069 (QPIP…PQKQ), and 1140–1232 (PHLM…QNND). The span at 26 to 37 (DWNNPYNASPPS) shows a compositional bias: polar residues. Residues 67-76 (RPILIQPARP) are compositionally biased toward low complexity. The segment covering 78–100 (SQKSNRQGTGMSNGSRGLNSTFN) has biased composition (polar residues). The segment covering 817-836 (QESQQHVPQPQPVENKSISS) has biased composition (polar residues). Residues 896 to 914 (SSVTVAASASRTSTLTSST) show a composition bias toward low complexity. Polar residues-rich tracts occupy residues 1046–1060 (QQAT…NAKT), 1149–1159 (SNKSSTNSLRS), and 1168–1178 (YLQSGMATSQA). The segment covering 1194–1203 (PMSFSFMPAP) has biased composition (low complexity). Polar residues predominate over residues 1222 to 1232 (PSESLSKQNND).

This sequence belongs to the SEC16 family. Interacts with tfg-1 (via N-terminus); the interaction is direct and is required for both the localization of tfg-1 and to maintain the distribution of sec-16A.1 at endoplasmic reticulum exit sites (ERES).

It localises to the endoplasmic reticulum. Its subcellular location is the endoplasmic reticulum-Golgi intermediate compartment. Plays a role in the organization of the endoplasmic reticulum exit sites (ERES), also known as transitional endoplasmic reticulum (tER). In association with tfg-1, accumulates at ERES to positively regulate secretory cargo trafficking from the endoplasmic reticulum to the endoplasmic reticulum-Golgi intermediate compartment (ERGIC) and Golgi apparatus. In Caenorhabditis elegans, this protein is Protein transport protein sec-16A.1.